We begin with the raw amino-acid sequence, 272 residues long: Shikimate dehydrogenase (NADP(+)) (272 aa).

Residues 14–16 (SKS) and threonine 61 each bind shikimate. The Proton acceptor role is filled by lysine 65. Glutamate 77 contacts NADP(+). Positions 86 and 102 each coordinate shikimate. NADP(+) contacts are provided by residues 126-130 (GAGGA), 149-154 (NRTYSR), and methionine 213. Tyrosine 215 is a shikimate binding site. Glycine 237 contributes to the NADP(+) binding site.

This sequence belongs to the shikimate dehydrogenase family. As to quaternary structure, homodimer.

The catalysed reaction is shikimate + NADP(+) = 3-dehydroshikimate + NADPH + H(+). Its pathway is metabolic intermediate biosynthesis; chorismate biosynthesis; chorismate from D-erythrose 4-phosphate and phosphoenolpyruvate: step 4/7. Its function is as follows. Involved in the biosynthesis of the chorismate, which leads to the biosynthesis of aromatic amino acids. Catalyzes the reversible NADPH linked reduction of 3-dehydroshikimate (DHSA) to yield shikimate (SA). The chain is Shikimate dehydrogenase (NADP(+)) from Enterobacter sp. (strain 638).